We begin with the raw amino-acid sequence, 75 residues long: Large ribosomal subunit protein bL31 (75 aa).

In terms of assembly, part of the 50S ribosomal subunit.

In terms of biological role, binds the 23S rRNA. The chain is Large ribosomal subunit protein bL31 from Rhodopseudomonas palustris (strain ATCC BAA-98 / CGA009).